A 94-amino-acid chain; its full sequence is Integration host factor subunit beta (94 aa).

Belongs to the bacterial histone-like protein family. Heterodimer of an alpha and a beta chain.

Functionally, this protein is one of the two subunits of integration host factor, a specific DNA-binding protein that functions in genetic recombination as well as in transcriptional and translational control. The chain is Integration host factor subunit beta (ihfB) from Haemophilus influenzae (strain ATCC 51907 / DSM 11121 / KW20 / Rd).